A 322-amino-acid polypeptide reads, in one-letter code: Cytochrome c biogenesis protein CcsA (322 aa).

The next 8 helical transmembrane spans lie at 9 to 29 (ILTH…LITL), 44 to 64 (GMIA…IYSG), 71 to 91 (LYES…VPYF), 98 to 118 (LTTI…SGLL), 143 to 163 (MILS…LLVI), 226 to 246 (VISL…VWAN), 253 to 273 (WSWD…AIYL), and 287 to 307 (AIVA…VNLL).

It belongs to the CcmF/CycK/Ccl1/NrfE/CcsA family. As to quaternary structure, may interact with Ccs1.

It localises to the plastid. Its subcellular location is the chloroplast thylakoid membrane. Its function is as follows. Required during biogenesis of c-type cytochromes (cytochrome c6 and cytochrome f) at the step of heme attachment. The protein is Cytochrome c biogenesis protein CcsA of Helianthus annuus (Common sunflower).